The following is a 60-amino-acid chain: MAVPARHTSKAKKNKRRTHYKLTAPSVKFDETTGDYSRSHRVSLKGYYKGRKIAKANAAE.

Belongs to the bacterial ribosomal protein bL32 family.

This Streptococcus equi subsp. zooepidemicus (strain MGCS10565) protein is Large ribosomal subunit protein bL32.